We begin with the raw amino-acid sequence, 108 residues long: Iron-sulfur cluster assembly protein CyaY (108 aa).

It belongs to the frataxin family.

In terms of biological role, involved in iron-sulfur (Fe-S) cluster assembly. May act as a regulator of Fe-S biogenesis. The polypeptide is Iron-sulfur cluster assembly protein CyaY (Burkholderia orbicola (strain MC0-3)).